A 458-amino-acid chain; its full sequence is Tubulin beta chain (458 aa).

GTP contacts are provided by Q11, E69, S138, G142, T143, G144, N204, and N226. E69 serves as a coordination point for Mg(2+). The interval 426-458 is disordered; that stretch reads EAATVEGEEEEDEYAEGGVVNGDQSYDEPYQAA. Residues 431–440 show a composition bias toward acidic residues; the sequence is EGEEEEDEYA.

The protein belongs to the tubulin family. As to quaternary structure, dimer of alpha and beta chains. A typical microtubule is a hollow water-filled tube with an outer diameter of 25 nm and an inner diameter of 15 nM. Alpha-beta heterodimers associate head-to-tail to form protofilaments running lengthwise along the microtubule wall with the beta-tubulin subunit facing the microtubule plus end conferring a structural polarity. Microtubules usually have 13 protofilaments but different protofilament numbers can be found in some organisms and specialized cells. Mg(2+) serves as cofactor.

The protein resides in the cytoplasm. It localises to the cytoskeleton. Functionally, tubulin is the major constituent of microtubules, a cylinder consisting of laterally associated linear protofilaments composed of alpha- and beta-tubulin heterodimers. Microtubules grow by the addition of GTP-tubulin dimers to the microtubule end, where a stabilizing cap forms. Below the cap, tubulin dimers are in GDP-bound state, owing to GTPase activity of alpha-tubulin. This Pyropia yezoensis (Susabi-nori) protein is Tubulin beta chain (TUBB1).